Consider the following 1459-residue polypeptide: DNA-binding protein RFX7 (1459 aa).

The segment at 1–27 (MAEEQQQPPPQQLDAPQQLPLSAPNPG) is disordered. A compositionally biased stretch (low complexity) spans 12–21 (QLDAPQQLPL). A DNA-binding region (RFX-type winged-helix) is located at residues 108–183 (AFSWIRNTLE…YCYSGLRKKA (76 aa)). Residues 188 to 193 (PTLPNL) carry the PxLPxI/L motif; mediates interaction with ANKRA2 and RFXANK motif. 6 disordered regions span residues 303–347 (AKQQ…LPNG), 404–428 (SVKQ…ARHR), 482–590 (PSNS…GVTE), 634–659 (FTST…SPRK), 688–716 (GQKP…AQIP), and 918–1016 (SVTP…VPPS). Composition is skewed to polar residues over residues 404 to 416 (SVKQ…QNVP) and 482 to 502 (PSNS…TGTT). Residues 521–534 (SPGSRASSTGGTSA) show a composition bias toward low complexity. A compositionally biased stretch (basic and acidic residues) spans 537–549 (VKMEPEGSSDEHP). Polar residues-rich tracts occupy residues 562–578 (PLTT…NTDG), 634–645 (FTSTSSPSNGDS), and 706–716 (TESSTAGAQIP). Pro residues predominate over residues 947–963 (TPTPTPTPTPTPTPTPT). The segment covering 971 to 1009 (GSQSLSRESPCSRLAQTTPVDSALGSSRHTPIGTPHSNC) has biased composition (polar residues).

The protein belongs to the RFX family. In terms of assembly, interacts (via PxLPxI/L motif) with RFXANK (via ankyrin repeats). Interacts (via PxLPxI/L motif) with ANKRA2 (via ankyrin repeats). As to expression, expressed in spleen and lymph node and to a lower extend in brain (at protein level). Expressed in lymphoid organs and lymphoid cell subsets. Expressed throughout natural killer (NK) cell maturation.

The protein localises to the nucleus. Its function is as follows. Transcription factor. Acts as a transcriptional activator by binding to promoter regions of target genes, such as Rec8, Mxd4 and Ddit4. Plays a role in natural killer (NK) cell maintenance and immunity. May play a role in the process of ciliogenesis in the neural tube and neural tube closure. This chain is DNA-binding protein RFX7, found in Mus musculus (Mouse).